The sequence spans 143 residues: uncharacterized protein (143 aa).

This is an uncharacterized protein from Mycobacterium tuberculosis (strain CDC 1551 / Oshkosh).